A 720-amino-acid polypeptide reads, in one-letter code: Translation initiation factor IF-2 (720 aa).

The tract at residues 48–138 (KKFKASQAKD…NEVEETKEMP (91 aa)) is disordered. 2 stretches are compositionally biased toward low complexity: residues 60-75 (KQNTQNNHQKSNNKQN) and 99-113 (KGKQQNKNNKTNKNQ). Positions 114 to 123 (KNNKNKKNNK) are enriched in basic residues. In terms of domain architecture, tr-type G spans 222-391 (ERPAVVTIMG…GLVAEVQELK (170 aa)). The interval 231-238 (GHVDHGKT) is G1. 231–238 (GHVDHGKT) contributes to the GTP binding site. The segment at 256–260 (GITQH) is G2. Residues 277 to 280 (DTPG) are G3. Residues 277–281 (DTPGH) and 331–334 (NKID) contribute to the GTP site. Positions 331 to 334 (NKID) are G4. The tract at residues 367–369 (SAL) is G5.

It belongs to the TRAFAC class translation factor GTPase superfamily. Classic translation factor GTPase family. IF-2 subfamily.

It is found in the cytoplasm. One of the essential components for the initiation of protein synthesis. Protects formylmethionyl-tRNA from spontaneous hydrolysis and promotes its binding to the 30S ribosomal subunits. Also involved in the hydrolysis of GTP during the formation of the 70S ribosomal complex. The sequence is that of Translation initiation factor IF-2 from Staphylococcus epidermidis (strain ATCC 35984 / DSM 28319 / BCRC 17069 / CCUG 31568 / BM 3577 / RP62A).